Reading from the N-terminus, the 288-residue chain is NAD(P)H-hydrate epimerase (288 aa).

A mitochondrion-targeting transit peptide spans 1–32; it reads MSGLRALLGLGLLVAGSRLSRVRVQAGSCRAG. Ser49 carries the phosphoserine modification. Residues 65–275 form the YjeF N-terminal domain; the sequence is AQAVDQELFN…ALEKKYQLNL (211 aa). 119 to 123 serves as a coordination point for (6S)-NADPHX; sequence NNGGD. K(+) is bound at residue Asn120. Residue Lys144 is modified to N6-succinyllysine. Asp185 is a K(+) binding site. (6S)-NADPHX contacts are provided by residues 189 to 195 and Asp218; that span reads GFSFTGE. Ser221 contributes to the K(+) binding site.

It belongs to the NnrE/AIBP family. Homodimer. Interacts with APOA1 and APOA2. K(+) serves as cofactor. Post-translationally, undergoes physiological phosphorylation during sperm capacitation, downstream to PKA activation.

The protein localises to the mitochondrion. The protein resides in the secreted. It catalyses the reaction (6R)-NADHX = (6S)-NADHX. The catalysed reaction is (6R)-NADPHX = (6S)-NADPHX. Catalyzes the epimerization of the S- and R-forms of NAD(P)HX, a damaged form of NAD(P)H that is a result of enzymatic or heat-dependent hydration. This is a prerequisite for the S-specific NAD(P)H-hydrate dehydratase to allow the repair of both epimers of NAD(P)HX. Accelerates cholesterol efflux from endothelial cells to high-density lipoprotein (HDL) and thereby regulates angiogenesis. The chain is NAD(P)H-hydrate epimerase from Bos taurus (Bovine).